The following is a 263-amino-acid chain: Endonuclease 8 (263 aa).

Proline 2 (schiff-base intermediate with DNA) is an active-site residue. Glutamate 3 serves as the catalytic Proton donor. The active-site Proton donor; for beta-elimination activity is the lysine 53. Residues glutamine 70, arginine 125, and asparagine 169 each coordinate DNA. The FPG-type zinc finger occupies 229 to 263 (KVFHRDGEPCERCGGIIEKTTLSSRPFYWCPGCQH). The active-site Proton donor; for delta-elimination activity is the arginine 253.

The protein belongs to the FPG family. The cofactor is Zn(2+).

It catalyses the reaction 2'-deoxyribonucleotide-(2'-deoxyribose 5'-phosphate)-2'-deoxyribonucleotide-DNA = a 3'-end 2'-deoxyribonucleotide-(2,3-dehydro-2,3-deoxyribose 5'-phosphate)-DNA + a 5'-end 5'-phospho-2'-deoxyribonucleoside-DNA + H(+). In terms of biological role, involved in base excision repair of DNA damaged by oxidation or by mutagenic agents. Acts as a DNA glycosylase that recognizes and removes damaged bases. Has a preference for oxidized pyrimidines, such as thymine glycol, 5,6-dihydrouracil and 5,6-dihydrothymine. Has AP (apurinic/apyrimidinic) lyase activity and introduces nicks in the DNA strand. Cleaves the DNA backbone by beta-delta elimination to generate a single-strand break at the site of the removed base with both 3'- and 5'-phosphates. In Escherichia coli O6:K15:H31 (strain 536 / UPEC), this protein is Endonuclease 8.